A 483-amino-acid chain; its full sequence is MGLFDFSVKELHDKLVKKEITPFDLVTESFNRIESVEDKVGSFITLNKEAAFDVAEELGDAGIDPNNMLAGLPIGIKDNIVTKNLRTTAASKILENFDPIYDATVVSKLKNAQTINIGKLNMDEFAMGSSTETSYFHKTHNPWDLSRVPGGSSGGSASAVAAGEVLFSLGSDTGGSIRQPAAFCGVVGMKPTYGRVSRFGLIAFASSLDQIGPITKNVEDNAYLLEAISGLDANDSTSINQPVERFSDNLTGDIKGLRIGVPKEYLGEGVDPGVKQAVLDALKTLEKLGATWDEVSLPHSEYGVASYYILASSEASSNLSRFDGVRYGYRSPNAHTLEELYKKTRSEGFGDEVKRRIMLGTYALSSGYYDAYYKKAQQARTLIKQDFVNVFEKYDVIIGPSSPTTAFKIDGMINDPITMYSNDILTVPINLAGVPAISVPCGFSEGLPVGLQIIGNYFEESLLYKVAHAFEQETTFHKEKPNL.

Active-site charge relay system residues include lysine 77 and serine 152. Serine 176 functions as the Acyl-ester intermediate in the catalytic mechanism.

This sequence belongs to the amidase family. GatA subfamily. In terms of assembly, heterotrimer of A, B and C subunits.

The catalysed reaction is L-glutamyl-tRNA(Gln) + L-glutamine + ATP + H2O = L-glutaminyl-tRNA(Gln) + L-glutamate + ADP + phosphate + H(+). In terms of biological role, allows the formation of correctly charged Gln-tRNA(Gln) through the transamidation of misacylated Glu-tRNA(Gln) in organisms which lack glutaminyl-tRNA synthetase. The reaction takes place in the presence of glutamine and ATP through an activated gamma-phospho-Glu-tRNA(Gln). The chain is Glutamyl-tRNA(Gln) amidotransferase subunit A from Listeria welshimeri serovar 6b (strain ATCC 35897 / DSM 20650 / CCUG 15529 / CIP 8149 / NCTC 11857 / SLCC 5334 / V8).